Reading from the N-terminus, the 142-residue chain is Large ribosomal subunit protein uL13 (142 aa).

Belongs to the universal ribosomal protein uL13 family. As to quaternary structure, part of the 50S ribosomal subunit.

Its function is as follows. This protein is one of the early assembly proteins of the 50S ribosomal subunit, although it is not seen to bind rRNA by itself. It is important during the early stages of 50S assembly. This Agathobacter rectalis (strain ATCC 33656 / DSM 3377 / JCM 17463 / KCTC 5835 / VPI 0990) (Eubacterium rectale) protein is Large ribosomal subunit protein uL13.